A 348-amino-acid chain; its full sequence is Endoglucanase-6B (348 aa).

The substrate site is built by W52 and S54. Active-site proton donor residues include D92 and D139. Substrate is bound by residues N183, W186, N222, W282, K310, and E314. Residues N222 to P241 are compositionally biased toward low complexity. A disordered region spans residues N222 to S244.

The protein belongs to the glycosyl hydrolase 6 (cellulase B) family. Monomer.

The catalysed reaction is Endohydrolysis of (1-&gt;4)-beta-D-glucosidic linkages in cellulose, lichenin and cereal beta-D-glucans.. In terms of biological role, plays a central role in the recycling of plant biomass. The biological conversion of cellulose to glucose generally requires three types of hydrolytic enzymes: (1) Endoglucanases which cut internal beta-1,4-glucosidic bonds; (2) Exocellobiohydrolases that cut the disaccharide cellobiose from the non-reducing end of the cellulose polymer chain; (3) Beta-1,4-glucosidases which hydrolyze the cellobiose and other short cello-oligosaccharides to glucose. The sequence is that of Endoglucanase-6B from Humicola insolens (Soft-rot fungus).